A 153-amino-acid polypeptide reads, in one-letter code: Ribonuclease H (153 aa).

The RNase H type-1 domain occupies 4–145; that stretch reads SVDSVELFTD…ADQLANRGVD (142 aa). Residues D13, E51, D73, and D137 each contribute to the Mg(2+) site.

This sequence belongs to the RNase H family. In terms of assembly, monomer. Requires Mg(2+) as cofactor.

The protein resides in the cytoplasm. It carries out the reaction Endonucleolytic cleavage to 5'-phosphomonoester.. In terms of biological role, endonuclease that specifically degrades the RNA of RNA-DNA hybrids. The sequence is that of Ribonuclease H from Pseudomonas fluorescens (strain Pf0-1).